Here is a 751-residue protein sequence, read N- to C-terminus: Catalase-peroxidase (751 aa).

An N-terminal signal peptide occupies residues 1–12 (MSNETKCPFSHA). Residues 91–241 (WHSAGTYRIG…LAAVQMGLIY (151 aa)) constitute a cross-link (tryptophyl-tyrosyl-methioninium (Trp-Tyr) (with M-267)). Histidine 92 serves as the catalytic Proton acceptor. The tryptophyl-tyrosyl-methioninium (Tyr-Met) (with W-91) cross-link spans 241–267 (YVNPEGPDGNPDPLAAAHDIRESFGRM). Histidine 282 is a heme b binding site.

This sequence belongs to the peroxidase family. Peroxidase/catalase subfamily. Homodimer or homotetramer. Heme b is required as a cofactor. In terms of processing, formation of the three residue Trp-Tyr-Met cross-link is important for the catalase, but not the peroxidase activity of the enzyme.

It catalyses the reaction H2O2 + AH2 = A + 2 H2O. It carries out the reaction 2 H2O2 = O2 + 2 H2O. Bifunctional enzyme with both catalase and broad-spectrum peroxidase activity. The sequence is that of Catalase-peroxidase from Cupriavidus necator (strain ATCC 17699 / DSM 428 / KCTC 22496 / NCIMB 10442 / H16 / Stanier 337) (Ralstonia eutropha).